The following is a 390-amino-acid chain: Ankyrin repeat domain-containing protein 63 (390 aa).

5 ANK repeats span residues 11–40 (AGTR…RSII), 46–79 (QGRT…AVNL), 83–112 (RGRT…DPEA), 116–145 (AGNS…RLGL), and 153–182 (AGLT…RAAA). Disordered regions lie at residues 181–213 (AAAA…SPRR) and 226–245 (AGGH…ELAS). Position 193 is a phosphoserine (serine 193). Residue serine 304 is modified to Phosphoserine. The disordered stretch occupies residues 320–377 (VGLSPHPEGCPGSGRLGLRRRSTAPDIPSLVGEASGPESGPELENNALPFSVPGPKPW).

The sequence is that of Ankyrin repeat domain-containing protein 63 from Mus musculus (Mouse).